A 202-amino-acid polypeptide reads, in one-letter code: Protein U22 (202 aa).

2 helical membrane passes run 5-25 (GWSL…LHII) and 172-192 (FVYY…SCWF).

Its subcellular location is the host membrane. The sequence is that of Protein U22 (U22) from Human herpesvirus 6B (strain Z29) (HHV-6 variant B).